Consider the following 122-residue polypeptide: Large ribosomal subunit protein uL14 (122 aa).

This sequence belongs to the universal ribosomal protein uL14 family. Part of the 50S ribosomal subunit. Forms a cluster with proteins L3 and L19. In the 70S ribosome, L14 and L19 interact and together make contacts with the 16S rRNA in bridges B5 and B8.

In terms of biological role, binds to 23S rRNA. Forms part of two intersubunit bridges in the 70S ribosome. The polypeptide is Large ribosomal subunit protein uL14 (Bacillus cytotoxicus (strain DSM 22905 / CIP 110041 / 391-98 / NVH 391-98)).